A 477-amino-acid polypeptide reads, in one-letter code: UDP-N-acetylmuramate--L-alanine ligase (477 aa).

122–128 (GTHGKTT) contributes to the ATP binding site.

It belongs to the MurCDEF family.

The protein localises to the cytoplasm. The catalysed reaction is UDP-N-acetyl-alpha-D-muramate + L-alanine + ATP = UDP-N-acetyl-alpha-D-muramoyl-L-alanine + ADP + phosphate + H(+). It participates in cell wall biogenesis; peptidoglycan biosynthesis. Its function is as follows. Cell wall formation. This is UDP-N-acetylmuramate--L-alanine ligase from Xanthomonas oryzae pv. oryzae (strain MAFF 311018).